Reading from the N-terminus, the 514-residue chain is Phospholipase C D (514 aa).

The tat-type signal signal peptide spans 1–37 (MSQSHIGGVSRREFLAKVAAGGAGALMSFAGPVIEKA). A disordered region spans residues 492–514 (VPDPQIMPTQETTPTRGIPSGPC).

This sequence belongs to the bacterial phospholipase C family. In terms of processing, predicted to be exported by the Tat system. The position of the signal peptide cleavage has not been experimentally proven.

It is found in the secreted. It localises to the cell wall. It carries out the reaction a 1,2-diacyl-sn-glycero-3-phosphocholine + H2O = phosphocholine + a 1,2-diacyl-sn-glycerol + H(+). Its function is as follows. Involved in virulence. Induces cytotoxic effects on mouse macrophage cell lines, via direct or indirect enzymatic hydrolysis of cell membrane phospholipids. Hydrolyzes phosphatidylcholine. This chain is Phospholipase C D, found in Mycobacterium tuberculosis (strain CDC 1551 / Oshkosh).